The chain runs to 33 residues: Brevinin-2LT (33 aa).

A disulfide bridge connects residues Cys-27 and Cys-33.

In terms of tissue distribution, expressed by the skin glands.

It localises to the secreted. Its function is as follows. Has antibacterial activity. This Rana latastei (Italian agile frog) protein is Brevinin-2LT.